Here is a 304-residue protein sequence, read N- to C-terminus: Ribosomal protein L11 methyltransferase (304 aa).

4 residues coordinate S-adenosyl-L-methionine: Thr-152, Gly-173, Asp-195, and Asn-234.

It belongs to the methyltransferase superfamily. PrmA family.

The protein resides in the cytoplasm. The enzyme catalyses L-lysyl-[protein] + 3 S-adenosyl-L-methionine = N(6),N(6),N(6)-trimethyl-L-lysyl-[protein] + 3 S-adenosyl-L-homocysteine + 3 H(+). Its function is as follows. Methylates ribosomal protein L11. This chain is Ribosomal protein L11 methyltransferase, found in Cupriavidus metallidurans (strain ATCC 43123 / DSM 2839 / NBRC 102507 / CH34) (Ralstonia metallidurans).